We begin with the raw amino-acid sequence, 732 residues long: Probable zinc transporter cis4 (732 aa).

12 consecutive transmembrane segments (helical) span residues 52-72 (ETLGWFSVICAFSITGSGLEV), 79-99 (FYLIFGIFAFVSFTTQYLGIY), 111-131 (VIIASLSMVFITLGAFVLGTL), 163-183 (YIAFPICLFVINHILILLGYF), 189-209 (VFYASVFYILLGVFIRVFYLV), 219-239 (LAFLFSSIVVACLIQFNVLPL), 240-260 (GTINLSVTRFTILCFMQIFCI), 268-288 (IQFYLGKFDISLIMALISAII), 350-370 (IFYFFLLNVSYMFVQVIYGLW), 380-400 (AIHMAFDCIAILVGLVATTLA), 415-435 (IEALSGFTNGIFLVLISFSIV), and 453-473 (LLLVSFLGLVVNLVGILAFNH). Positions 526 to 547 (HVSQHEHTHENSQEHHHEHNHN) are disordered. 2 helical membrane passes run 586–606 (IFLHIIADTMGSVGVIVSTIL) and 615–635 (FDPLASLIIAALIFVSVLPLI).

This sequence belongs to the cation diffusion facilitator (CDF) transporter (TC 2.A.4) family. SLC30A subfamily. As to quaternary structure, interacts with zrg17.

The protein localises to the endoplasmic reticulum membrane. It localises to the golgi apparatus. The protein resides in the cis-Golgi network membrane. In terms of biological role, probable zinc transporter involved in Golgi membrane trafficking through the regulation of zinc homeostasis. In Schizosaccharomyces pombe (strain 972 / ATCC 24843) (Fission yeast), this protein is Probable zinc transporter cis4 (cis4).